The chain runs to 247 residues: Cobalt transport protein CbiM (247 aa).

Positions 1–21 (MVGWGVLILLMVLWLPRQAYA) are cleaved as a signal peptide. A run of 7 helical transmembrane segments spans residues 27–47 (GYLP…ALIL), 64–84 (LVLA…LPSV), 96–116 (LGAV…ILLF), 119–139 (LLLA…MAVV), 159–179 (GVAV…TTSL), 181–201 (LALA…KFAS), and 202–222 (IFAV…VIMV).

It belongs to the CbiM family. Forms an energy-coupling factor (ECF) transporter complex composed of an ATP-binding protein (A component, CbiO), a transmembrane protein (T component, CbiQ) and 2 possible substrate-capture proteins (S components, CbiM and CbiN) of unknown stoichimetry.

Its subcellular location is the cell membrane. The protein operates within cofactor biosynthesis; adenosylcobalamin biosynthesis. Part of the energy-coupling factor (ECF) transporter complex CbiMNOQ involved in cobalt import. The sequence is that of Cobalt transport protein CbiM from Kyrpidia tusciae (strain DSM 2912 / NBRC 15312 / T2) (Bacillus tusciae).